The following is a 632-amino-acid chain: Eukaryotic peptide chain release factor GTP-binding subunit ERF3B (632 aa).

Disordered regions lie at residues 1–31 (MDLG…GDGI) and 162–200 (SEAK…SIPS). Residues 178 to 192 (ESVKEVMEEKEEVRK) are compositionally biased toward basic and acidic residues. Residues 205-429 (KEHVNVVFIG…YLDSLPNFNR (225 aa)) enclose the tr-type G domain. Positions 214 to 221 (GHVDAGKS) are G1. 217–222 (DAGKST) contacts GTP. The interval 270 to 274 (GKTVE) is G2. The segment at 291–294 (DAPG) is G3. GTP-binding positions include 353-356 (NKMD) and 395-397 (SGL). The G4 stretch occupies residues 353–356 (NKMD). Residues 395 to 397 (SGL) form a G5 region.

This sequence belongs to the TRAFAC class translation factor GTPase superfamily. Classic translation factor GTPase family. ERF3 subfamily. Component of the eRF1-eRF3-GTP ternary complex, composed of ETF1/ERF1 and ERF3 (GSPT1/ERF3A or GSPT2/ERF3B) and GTP. Component of the transient SURF (SMG1-UPF1-eRF1-eRF3) complex. Interacts with UPF1 and PABPC1. Highly expressed in brain. Moderately expressed in spleen and lung. Weakly expressed in heart, liver and kidney. Expression during the cell-cycle progression is constant.

It is found in the cytoplasm. It carries out the reaction GTP + H2O = GDP + phosphate + H(+). In terms of biological role, GTPase component of the eRF1-eRF3-GTP ternary complex, a ternary complex that mediates translation termination in response to the termination codons UAA, UAG and UGA. GSPT2/ERF3B mediates ETF1/ERF1 delivery to stop codons: The eRF1-eRF3-GTP complex binds to a stop codon in the ribosomal A-site. GTP hydrolysis by GSPT2/ERF3B induces a conformational change that leads to its dissociation, permitting ETF1/ERF1 to accommodate fully in the A-site. Component of the transient SURF complex which recruits UPF1 to stalled ribosomes in the context of nonsense-mediated decay (NMD) of mRNAs containing premature stop codons. This Mus musculus (Mouse) protein is Eukaryotic peptide chain release factor GTP-binding subunit ERF3B (Gspt2).